Here is a 33-residue protein sequence, read N- to C-terminus: VSTSRGSQGCFGLKLDRIGAASGLGCWRRIVDS.

Cys-10 and Cys-26 are oxidised to a cystine.

In terms of tissue distribution, expressed by the venom gland.

Its subcellular location is the secreted. Snake venom natriuretic peptide that shows an increase in perfusion pressure, urinary flow and glomerular filtration rate. Reduces total and proximal tubular transport of sodium. In the aortic ring assay, causes a relaxant effect in endothelium-intact thoracic aortic rings precontracted with phenylephrine in the presence and absence of isatin, a natriuretic receptor antagonist. The polypeptide is Natriuretic peptide NP2 (Crotalus durissus cascavella (Northeastern Brazilian rattlesnake)).